A 235-amino-acid chain; its full sequence is Purine nucleoside phosphorylase DeoD-type (235 aa).

H4 contributes to the a purine D-ribonucleoside binding site. Residues G20, R24, R43, and 87–90 each bind phosphate; that span reads RVGT. A purine D-ribonucleoside is bound by residues E162, 179–181, and 203–204; these read EME and SD. The active-site Proton donor is D204.

This sequence belongs to the PNP/UDP phosphorylase family. As to quaternary structure, homohexamer; trimer of homodimers.

The enzyme catalyses a purine D-ribonucleoside + phosphate = a purine nucleobase + alpha-D-ribose 1-phosphate. It catalyses the reaction a purine 2'-deoxy-D-ribonucleoside + phosphate = a purine nucleobase + 2-deoxy-alpha-D-ribose 1-phosphate. Catalyzes the reversible phosphorolytic breakdown of the N-glycosidic bond in the beta-(deoxy)ribonucleoside molecules, with the formation of the corresponding free purine bases and pentose-1-phosphate. This chain is Purine nucleoside phosphorylase DeoD-type, found in Bacillus cereus (strain ATCC 14579 / DSM 31 / CCUG 7414 / JCM 2152 / NBRC 15305 / NCIMB 9373 / NCTC 2599 / NRRL B-3711).